A 421-amino-acid chain; its full sequence is Histidine--tRNA ligase (421 aa).

The protein belongs to the class-II aminoacyl-tRNA synthetase family. As to quaternary structure, homodimer.

The protein resides in the cytoplasm. The enzyme catalyses tRNA(His) + L-histidine + ATP = L-histidyl-tRNA(His) + AMP + diphosphate + H(+). In Francisella tularensis subsp. mediasiatica (strain FSC147), this protein is Histidine--tRNA ligase.